A 370-amino-acid polypeptide reads, in one-letter code: NSFL1 cofactor p47 (370 aa).

The segment at 54 to 73 (SQATPSSVSRGTAPSDNRVT) is disordered. Ser-74, Ser-102, Ser-114, and Ser-140 each carry phosphoserine. Disordered stretches follow at residues 80-116 (HDQDEEEEEEEGQRFYAGGSERSGQQIVGPPRKKSPN) and 138-157 (TKSPGETSKPRPFAGGGYRL). Residues 109 to 115 (PPRKKSP) carry the Nuclear localization signal motif. At Tyr-167 the chain carries Phosphotyrosine. A Nuclear localization signal motif is present at residues 172 to 175 (RRRH). 3 positions are modified to phosphoserine: Ser-176, Ser-192, and Ser-272. The SEP domain occupies 179 to 244 (DVHVVLKLWK…MEDHRDEDFV (66 aa)). The region spanning 291–368 (EAEPTTNIQI…NLLNAVIVQR (78 aa)) is the UBX domain.

This sequence belongs to the NSFL1C family. As to quaternary structure, part of a ternary complex containing STX5A, NSFL1C and VCP. NSFL1C forms a homotrimer that binds to one end of a VCP homohexamer. The complex binds to membranes enriched in phosphatidylethanolamine-containing lipids and promotes Golgi membrane fusion. Interaction with VCIP135 leads to dissociation of the complex via ATP hydrolysis by VCP. Binds ubiquitin and mono-ubiquitinated proteins via its N-terminal UBA-like domain when bound to VCP. In terms of processing, phosphorylated during mitosis. Phosphorylation inhibits interaction with Golgi membranes and is required for the fragmentation of the Golgi stacks during mitosis.

The protein resides in the nucleus. It is found in the golgi apparatus. It localises to the golgi stack. Its subcellular location is the chromosome. The protein localises to the cytoplasm. The protein resides in the cytoskeleton. It is found in the microtubule organizing center. It localises to the centrosome. Its function is as follows. Reduces the ATPase activity of VCP. Necessary for the fragmentation of Golgi stacks during mitosis and for VCP-mediated reassembly of Golgi stacks after mitosis. May play a role in VCP-mediated formation of transitional endoplasmic reticulum (tER). Inhibits the activity of CTSL (in vitro). Together with UBXN2B/p37, regulates the centrosomal levels of kinase AURKA/Aurora A during mitotic progression by promoting AURKA removal from centrosomes in prophase. Also, regulates spindle orientation during mitosis. In Mus musculus (Mouse), this protein is NSFL1 cofactor p47 (Nsfl1c).